Reading from the N-terminus, the 191-residue chain is NRRPHFLYPKSRLIRSLLPPPHYGPLSFHDMFQPFLEMIHQAQQAMDVQFHSPAFQFPDMDLLREGEDDRAVCKEIRHNSTGCLKMKGQCEKCQEILSVDCSANNPAQAHLRQELNDSLQVAERLTQRYNELLHSLQTKMLNTSSLLEQLNEQFNWVSQLANLTQGEDQYYLRVSTVTTHSSDSEVPSRVT.

N-linked (GlcNAc...) asparagine glycans are attached at residues Asn79, Asn116, Asn142, and Asn162. Phosphoserine is present on Ser184.

This sequence belongs to the clusterin family. Antiparallel disulfide-linked heterodimer of an alpha chain and a beta chain. Self-associates and forms higher oligomers. Interacts with a broad range of misfolded proteins, including APP, APOC2 and LYZ. Slightly acidic pH promotes interaction with misfolded proteins. Forms high-molecular weight oligomers upon interaction with misfolded proteins. Interacts with APOA1, LRP2, CLUAP1 and PON1. Interacts with the complement membrane attack complex. Interacts (via alpha chain) with XRCC6. Interacts with SYVN1, COMMD1, BTRC, CUL1 and with ubiquitin and SCF (SKP1-CUL1-F-box protein) E3 ubiquitin-protein ligase complexes. Interacts (via alpha chain) with BAX in stressed cells, where BAX undergoes a conformation change leading to association with the mitochondrial membrane. Does not interact with BAX in unstressed cells. Found in a complex with LTF, CLU, EPPIN and SEMG1. Interacts (immaturely glycosylated pre-secreted form) with HSPA5; this interaction promotes CLU stability and facilitates stress-induced CLU retrotranslocation from the secretory pathway to the mitochondria, thereby reducing stress-induced apoptosis by stabilizing mitochondrial membrane integrity. Interacts with BCL2L1; this interaction releases and activates BAX and promotes cell death. Interacts with TGFBR2 and ACVR1. Interacts (secreted form) with STMN3; this interaction may act as an important modulator during neuronal differentiation. In terms of processing, proteolytically cleaved on its way through the secretory system, probably within the Golgi lumen. Proteolytic cleavage is not necessary for its chaperone activity. All non-secreted forms are not proteolytically cleaved. Chaperone activity of uncleaved forms is dependent on a non-reducing environment. Post-translationally, polyubiquitinated, leading to proteasomal degradation. Under cellular stress, the intracellular level of cleaved form is reduced due to proteasomal degradation. Heavily N-glycosylated. About 30% of the protein mass is comprised of complex N-linked carbohydrate. Endoplasmic reticulum (ER) stress induces changes in glycosylation status and increases level of hypoglycosylated forms. Core carbohydrates are essential for chaperone activity. Non-secreted forms are hypoglycosylated or unglycosylated.

The protein localises to the secreted. It localises to the nucleus. The protein resides in the cytoplasm. Its subcellular location is the mitochondrion membrane. It is found in the cytosol. The protein localises to the microsome. It localises to the endoplasmic reticulum. The protein resides in the mitochondrion. Its subcellular location is the perinuclear region. It is found in the cytoplasmic vesicle. The protein localises to the secretory vesicle. It localises to the chromaffin granule. Its function is as follows. Functions as extracellular chaperone that prevents aggregation of non native proteins. Prevents stress-induced aggregation of blood plasma proteins. Inhibits formation of amyloid fibrils by APP, APOC2, B2M, CALCA, CSN3, SNCA and aggregation-prone LYZ variants (in vitro). Does not require ATP. Maintains partially unfolded proteins in a state appropriate for subsequent refolding by other chaperones, such as HSPA8/HSC70. Does not refold proteins by itself. Binding to cell surface receptors triggers internalization of the chaperone-client complex and subsequent lysosomal or proteasomal degradation. When secreted, protects cells against apoptosis and against cytolysis by complement: inhibits assembly of the complement membrane attack complex (MAC) by preventing polymerization of C9 pore component of the MAC complex. Intracellular forms interact with ubiquitin and SCF (SKP1-CUL1-F-box protein) E3 ubiquitin-protein ligase complexes and promote the ubiquitination and subsequent proteasomal degradation of target proteins. Promotes proteasomal degradation of COMMD1 and IKBKB. Modulates NF-kappa-B transcriptional activity. Following stress, promotes apoptosis. Inhibits apoptosis when associated with the mitochondrial membrane by interference with BAX-dependent release of cytochrome c into the cytoplasm. Plays a role in the regulation of cell proliferation. An intracellular form suppresses stress-induced apoptosis by stabilizing mitochondrial membrane integrity through interaction with HSPA5. Secreted form does not affect caspase or BAX-mediated intrinsic apoptosis and TNF-induced NF-kappa-B-activity. Secreted form act as an important modulator during neuronal differentiation through interaction with STMN3. Plays a role in the clearance of immune complexes that arise during cell injury. The chain is Clusterin from Mesocricetus auratus (Golden hamster).